The sequence spans 427 residues: BRO1 domain-containing protein BROX homolog (427 aa).

The BRO1 domain maps to 1–427; that stretch reads MSHWFHRNPI…PSNSSGCVIA (427 aa).

Belongs to the BROX family.

The sequence is that of BRO1 domain-containing protein BROX homolog from Caenorhabditis elegans.